Here is a 318-residue protein sequence, read N- to C-terminus: NADH-ubiquinone oxidoreductase chain 1 (318 aa).

Helical transmembrane passes span 2-22, 70-90, 100-120, 136-156, 171-191, 231-251, 253-273, and 294-314; these read FLMN…FLTL, MFIL…IPMP, LGVL…LWSG, VAQT…IMML, HLWL…STLA, IIMM…NPLF, ELFT…FLWV, and LPLT…LAGI.

This sequence belongs to the complex I subunit 1 family.

It is found in the mitochondrion inner membrane. The enzyme catalyses a ubiquinone + NADH + 5 H(+)(in) = a ubiquinol + NAD(+) + 4 H(+)(out). Its function is as follows. Core subunit of the mitochondrial membrane respiratory chain NADH dehydrogenase (Complex I) that is believed to belong to the minimal assembly required for catalysis. Complex I functions in the transfer of electrons from NADH to the respiratory chain. The immediate electron acceptor for the enzyme is believed to be ubiquinone. This Priodontes maximus (Giant armadillo) protein is NADH-ubiquinone oxidoreductase chain 1 (MT-ND1).